A 159-amino-acid chain; its full sequence is Outer envelope pore protein 16-3, chloroplastic/mitochondrial (159 aa).

Methionine 1 bears the N-acetylmethionine mark. The segment at 1–65 (MDPAEMRYLE…IRTLKMMGTH (65 aa)) is contains beta strands. Transmembrane regions (helical) follow at residues 24–40 (ITGF…LATW), 62–79 (MGTH…YIGV), and 92–109 (FYNG…VLGY).

It belongs to the Tim17/Tim22/Tim23 family. Plastid outer envelope porin OEP16 (TC 1.B.30) subfamily. As to quaternary structure, homodimer and oligomers in membrane. Part of both the NADH-ubiquinone oxidoreductase complex I and of the TIM17:23 complex. Interacts with TIM23-2.

The protein localises to the plastid. It is found in the chloroplast outer membrane. Its subcellular location is the mitochondrion outer membrane. The protein resides in the mitochondrion inner membrane. Voltage-dependent high-conductance channel with a slight cation-selectivity; selective for amino acids but excludes triosephosphates or uncharged sugars. Non-essential amino acid-selective channel protein and translocation pore for NADPH:protochlorophyllide oxidoreductase A (PORA) and possibly PORB. This Arabidopsis thaliana (Mouse-ear cress) protein is Outer envelope pore protein 16-3, chloroplastic/mitochondrial (OEP163).